Consider the following 698-residue polypeptide: Epithelial sodium channel subunit alpha (698 aa).

Residues 1 to 70 (MLDHTRAPEL…SAPRQPTEEE (70 aa)) are disordered. At 1-110 (MLDHTRAPEL…CSKHNRMKTA (110 aa)) the chain is on the cytoplasmic side. A helical transmembrane segment spans residues 111 to 131 (FWAVLWLCTFGMMYWQFALLF). Over 132 to 589 (EEYLSYPVSL…SQWSLWFGSS (458 aa)) the chain is Extracellular. Disulfide bonds link Cys-158/Cys-332, Cys-256/Cys-263, and Cys-309/Cys-316. N-linked (GlcNAc...) asparagine glycosylation is present at Asn-190. Positions 200-270 (RRRSSRDLLG…SDCFYQTYSS (71 aa)) are gating release of inhibition by proteolysis (GRIP); protease-sensitive region that is responsible for the proteolytic activation of the channel. The segment at 213-243 (HPLQRLRTPPPPYSGRTARSGSSSVRDNNPQ) is disordered. Residues 229–243 (TARSGSSSVRDNNPQ) are compositionally biased toward polar residues. Asn-259 carries N-linked (GlcNAc...) asparagine glycosylation. Residues Asn-320, Asn-339, and Asn-424 are each glycosylated (N-linked (GlcNAc...) asparagine). 7 cysteine pairs are disulfide-bonded: Cys-421–Cys-506, Cys-443–Cys-483, Cys-443–Cys-502, Cys-447–Cys-498, Cys-456–Cys-483, Cys-456–Cys-506, and Cys-458–Cys-472. Asn-538 carries an N-linked (GlcNAc...) asparagine glycan. Residues 590–610 (VLSVVEMAELIFDLLVITLLM) form a helical membrane-spanning segment. The Cytoplasmic portion of the chain corresponds to 611–698 (LLRRFRSRYW…DCSACALAAL (88 aa)). Positions 637 to 663 (ASSFPSRFCPHPTSPPPSLPQQGMTPP) are disordered. The short motif at 669–673 (PPPAY) is the PY motif; recruits WW domain-containing proteins and is thereby required for ubiquitination and inhibition of the channel by NEDD4 and NEDD4L element.

This sequence belongs to the amiloride-sensitive sodium channel (TC 1.A.6) family. SCNN1A subfamily. Heterotrimer; containing an alpha/SCNN1A, a beta/SCNN1B and a gamma/SCNN1G subunit. Interacts with WWP1 (via WW domains). Interacts with WWP2 (via WW domains); inhibits the channel. Interacts with BPIFA1; the interaction is indirect via SCNN1B and inhibits the proteolytic processing of SCNN1A and SCNN1G and the activation of ENaC. Interacts with the full-length immature form of PCSK9 (pro-PCSK9). Ubiquitinated. Can be ubiquitinated at multiple sites and undergo monoubiquitination and polyubiquitination. Ubiquitination by NEDD4 or NEDD4L inhibits the ENaC channel through endocytosis, intracellular retention and degradation of its individual subunits. Post-translationally, N-glycosylated. In terms of processing, ENaC is activated through the proteolytic maturation of its subunits. Furin cleaves the SCNN1A subunit, which results in a stepwise increase in the open probability of the channel due to the release of an inhibitory tract. BPIFA1, which is recruited by the SCNN1B subunit, prevents the proteolytic activation of ENaC. In terms of tissue distribution, detected in kidney, lung and testis (at protein level). In the testis, detected within the seminiferous tubules but not in the interstitial cells (at protein level).

Its subcellular location is the apical cell membrane. It is found in the cell projection. It localises to the cilium. The protein resides in the cytoplasmic granule. The protein localises to the cytoplasm. Its subcellular location is the cytoplasmic vesicle. It is found in the secretory vesicle. It localises to the acrosome. The protein resides in the flagellum. It carries out the reaction Na(+)(in) = Na(+)(out). Originally identified and characterized by its inhibition by the diuretic drug amiloride. This is one of the three pore-forming subunits of the heterotrimeric epithelial sodium channel (ENaC), a critical regulator of sodium balance and fluid homeostasis. ENaC operates in epithelial tissues, where it mediates the electrodiffusion of sodium ions from extracellular fluid through the apical membrane of cells, with water following osmotically. It plays a key role in maintaining sodium homeostasis through electrogenic sodium reabsorption in the kidneys. Additionally, ENaC is essential for airway surface liquid homeostasis, which is crucial for proper mucus clearance. In Rattus norvegicus (Rat), this protein is Epithelial sodium channel subunit alpha.